The sequence spans 383 residues: Protein salvador homolog 1 (383 aa).

Serine 94 and serine 136 each carry phosphoserine. WW domains lie at 199–232 (LPLP…HPLE) and 234–267 (EGLP…HPCA). Threonine 210 carries the phosphothreonine modification. An SARAH domain is found at 321 to 368 (ILKWELFQLADLDTYQGMLKLLFMKELEQIVKMYEAYRQALLTELENR). Positions 344 to 373 (MKELEQIVKMYEAYRQALLTELENRKQRQQ) form a coiled coil.

In terms of assembly, homodimer. Stabilized through interaction with STK3/MST2 or STK4/MST1. Interacts (via SARAH domain) with isoform 1 of NEK2. Interacts with ESR1 only in the presence of STK3/MST2. Interacts with WTIP and AJUBA. Post-translationally, phosphorylated by STK3/MST2 and STK4/MST1. Phosphorylation is not required for SAV1 stability and may increase the number of protein binding sites on the scaffold molecule. In terms of tissue distribution, ubiquitously expressed in adult tissues with highest expression in the pancreas, aorta and interventricular septum and lowest expression in skeletal muscle. Expression was higher in fetal than in the adult heart. Expressed in various cell lines.

The protein localises to the nucleus. Its subcellular location is the cytoplasm. Its function is as follows. Regulator of STK3/MST2 and STK4/MST1 in the Hippo signaling pathway which plays a pivotal role in organ size control and tumor suppression by restricting proliferation and promoting apoptosis. The core of this pathway is composed of a kinase cascade wherein STK3/MST2 and STK4/MST1, in complex with its regulatory protein SAV1, phosphorylates and activates LATS1/2 in complex with its regulatory protein MOB1, which in turn phosphorylates and inactivates YAP1 oncoprotein and WWTR1/TAZ. Phosphorylation of YAP1 by LATS1/2 inhibits its translocation into the nucleus to regulate cellular genes important for cell proliferation, cell death, and cell migration. SAV1 is required for STK3/MST2 and STK4/MST1 activation and promotes cell-cycle exit and terminal differentiation in developing epithelial tissues. Plays a role in centrosome disjunction by regulating the localization of NEK2 to centrosomes, and its ability to phosphorylate CROCC and CEP250. In conjunction with STK3/MST2, activates the transcriptional activity of ESR1 through the modulation of its phosphorylation. The protein is Protein salvador homolog 1 of Homo sapiens (Human).